Consider the following 547-residue polypeptide: Chaperonin GroEL (547 aa).

ATP-binding positions include 30-33 (TLGP), 87-91 (DGTTT), Gly414, 478-480 (DAL), and Asp494.

Belongs to the chaperonin (HSP60) family. Forms a cylinder of 14 subunits composed of two heptameric rings stacked back-to-back. Interacts with the co-chaperonin GroES.

The protein resides in the cytoplasm. The enzyme catalyses ATP + H2O + a folded polypeptide = ADP + phosphate + an unfolded polypeptide.. Functionally, together with its co-chaperonin GroES, plays an essential role in assisting protein folding. The GroEL-GroES system forms a nano-cage that allows encapsulation of the non-native substrate proteins and provides a physical environment optimized to promote and accelerate protein folding. In Desulforudis audaxviator (strain MP104C), this protein is Chaperonin GroEL.